The primary structure comprises 1416 residues: 1-phosphatidylinositol 4,5-bisphosphate phosphodiesterase eta-2 (1416 aa).

The segment at 1–155 (MSGPWPSPDS…WVTGLRYLMA (155 aa)) is necessary for plasma membrane localization. Residues 47–155 (GAMQEGMQMV…WVTGLRYLMA (109 aa)) form the PH domain. EF-hand domains are found at residues 169–204 (TRDQ…LNVN) and 205–241 (LPRQ…MSTR). Positions 182, 184, 186, 188, and 193 each coordinate Ca(2+). Residues 326 to 471 (QDMTQPLSHY…LKGKILVKGK (146 aa)) enclose the PI-PLC X-box domain. Residue His341 is part of the active site. 3 residues coordinate Ca(2+): Asn342, Glu371, and Asp373. Residue His385 is part of the active site. Glu420 is a Ca(2+) binding site. Substrate contacts are provided by Lys469 and Lys471. Ser487 and Ser491 each carry phosphoserine. The interval 535 to 620 (DPNNFSVSTL…RGATRQKKTM (86 aa)) is disordered. Over residues 537–546 (NNFSVSTLSP) the composition is skewed to polar residues. Residues 581–592 (SRRKKKGSKLKK) show a composition bias toward basic residues. Residues Ser595 and Ser605 each carry the phosphoserine modification. The region spanning 626–740 (LSDLVKYTKS…GYVLKPGCMC (115 aa)) is the PI-PLC Y-box domain. The substrate site is built by Ser653 and Arg680. In terms of domain architecture, C2 spans 740-869 (CQGVFNPNSE…PGYRHVYLEG (130 aa)). 6 residues coordinate Ca(2+): Ile784, Asp786, Asp810, Asp839, His840, and Asp841. Disordered regions lie at residues 905 to 1109 (GSLD…GGWR), 1121 to 1222 (YSDA…LQPR), and 1315 to 1405 (ITSP…GPAS). The segment covering 1011–1021 (APGPGPPPPAA) has biased composition (pro residues). The segment covering 1073-1083 (GSQTDGRSQPR) has biased composition (polar residues). Residues 1143–1166 (VSSSSSMSSSDTVIDLSLPSLGLG) are compositionally biased toward low complexity. The segment covering 1199 to 1208 (KSKSNPNLRA) has biased composition (polar residues). Gly residues predominate over residues 1324-1333 (AGEGVAGGPG).

Ca(2+) serves as cofactor. As to expression, expressed in retina and kidney.

The protein localises to the cytoplasm. Its subcellular location is the cell membrane. The enzyme catalyses a 1,2-diacyl-sn-glycero-3-phospho-(1D-myo-inositol-4,5-bisphosphate) + H2O = 1D-myo-inositol 1,4,5-trisphosphate + a 1,2-diacyl-sn-glycerol + H(+). Its activity is regulated as follows. Activity is stimulated by GNB1:GNG2. Functionally, the production of the second messenger molecules diacylglycerol (DAG) and inositol 1,4,5-trisphosphate (IP3) is mediated by activated phosphatidylinositol-specific phospholipase C enzymes. This phospholipase activity is very sensitive to calcium. May be important for formation and maintenance of the neuronal network in the postnatal brain. This chain is 1-phosphatidylinositol 4,5-bisphosphate phosphodiesterase eta-2, found in Homo sapiens (Human).